The following is an 83-amino-acid chain: Molybdopterin synthase sulfur carrier subunit (83 aa).

This sequence belongs to the MoaD family.

It participates in cofactor biosynthesis; molybdopterin biosynthesis. Involved in sulfur transfer in the conversion of molybdopterin precursor Z to molybdopterin. Probably plays a role in host phagosome maturation arrest. This chain is Molybdopterin synthase sulfur carrier subunit (moaD1), found in Mycobacterium tuberculosis (strain ATCC 25618 / H37Rv).